Reading from the N-terminus, the 1372-residue chain is Serine protease pic autotransporter (1372 aa).

The first 55 residues, 1–55 (MNKVYSLKYCPVTGGLIAVSELARRVIKKTCRRLTHILLAGIPAICLCYSQISQA), serve as a signal peptide directing secretion. In terms of domain architecture, Peptidase S6 spans 56 to 301 (GIVRSDIAYQ…NVIPTDYLNQ (246 aa)). Residues histidine 127, aspartate 155, and serine 258 each act as charge relay system in the active site. The region spanning 1106 to 1372 (DTNGDAGAWA…AVNANFRYMF (267 aa)) is the Autotransporter domain.

Post-translationally, cleaved to release the mature protein from the outer membrane.

It localises to the periplasm. It is found in the secreted. The protein localises to the cell surface. Its subcellular location is the cell outer membrane. Functionally, involved in intestinal colonization, displays in vitro mucinolytic activity, serum resistance, and hemagglutination. Important to penetrate the intestinal mucus layer. This chain is Serine protease pic autotransporter (pic), found in Escherichia coli O44:H18 (strain 042 / EAEC).